The primary structure comprises 98 residues: NADH-quinone oxidoreductase subunit K (98 aa).

3 helical membrane-spanning segments follow: residues 1-21 (MGHLLGLGAVLFCISLAGIFL), 27-47 (IVLLMSIELMLLSVNVNFIAF), and 59-79 (FVFFILTVAAAEAAIGLAILV).

The protein belongs to the complex I subunit 4L family. In terms of assembly, NDH-1 is composed of 14 different subunits. Subunits NuoA, H, J, K, L, M, N constitute the membrane sector of the complex.

It is found in the cell inner membrane. The catalysed reaction is a quinone + NADH + 5 H(+)(in) = a quinol + NAD(+) + 4 H(+)(out). In terms of biological role, NDH-1 shuttles electrons from NADH, via FMN and iron-sulfur (Fe-S) centers, to quinones in the respiratory chain. The immediate electron acceptor for the enzyme in this species is believed to be ubiquinone. Couples the redox reaction to proton translocation (for every two electrons transferred, four hydrogen ions are translocated across the cytoplasmic membrane), and thus conserves the redox energy in a proton gradient. The protein is NADH-quinone oxidoreductase subunit K of Xanthomonas oryzae pv. oryzae (strain PXO99A).